The sequence spans 378 residues: Alkanesulfonate monooxygenase (378 aa).

It belongs to the SsuD family.

The catalysed reaction is an alkanesulfonate + FMNH2 + O2 = an aldehyde + FMN + sulfite + H2O + 2 H(+). In terms of biological role, catalyzes the desulfonation of aliphatic sulfonates. This Bacillus velezensis (strain DSM 23117 / BGSC 10A6 / LMG 26770 / FZB42) (Bacillus amyloliquefaciens subsp. plantarum) protein is Alkanesulfonate monooxygenase.